The chain runs to 378 residues: Uroporphyrinogen decarboxylase (378 aa).

Substrate is bound by residues 40-44, Asp90, Tyr167, Ser222, and His355; that span reads RQAGR.

Belongs to the uroporphyrinogen decarboxylase family. As to quaternary structure, homodimer.

It is found in the cytoplasm. The enzyme catalyses uroporphyrinogen III + 4 H(+) = coproporphyrinogen III + 4 CO2. The protein operates within porphyrin-containing compound metabolism; protoporphyrin-IX biosynthesis; coproporphyrinogen-III from 5-aminolevulinate: step 4/4. In terms of biological role, catalyzes the decarboxylation of four acetate groups of uroporphyrinogen-III to yield coproporphyrinogen-III. The sequence is that of Uroporphyrinogen decarboxylase from Psychrobacter arcticus (strain DSM 17307 / VKM B-2377 / 273-4).